The sequence spans 231 residues: Ion-translocating oxidoreductase complex subunit E (231 aa).

The next 6 helical transmembrane spans lie at 18-38 (GLVQ…LTNA), 39-59 (LGLG…VSLV), 69-89 (IPVF…FINA), 93-113 (GLYL…VIIG), 127-147 (STFD…VLGA), and 182-202 (TFLL…LIAL).

This sequence belongs to the NqrDE/RnfAE family. The complex is composed of six subunits: RnfA, RnfB, RnfC, RnfD, RnfE and RnfG.

It localises to the cell inner membrane. Functionally, part of a membrane-bound complex that couples electron transfer with translocation of ions across the membrane. This is Ion-translocating oxidoreductase complex subunit E from Shewanella piezotolerans (strain WP3 / JCM 13877).